Here is a 145-residue protein sequence, read N- to C-terminus: Small ribosomal subunit protein eS12A (145 aa).

Belongs to the eukaryotic ribosomal protein eS12 family. As to quaternary structure, component of the small ribosomal subunit (SSU). Mature yeast ribosomes consist of a small (40S) and a large (60S) subunit. The 40S small subunit contains 1 molecule of ribosomal RNA (18S rRNA) and at least 33 different proteins. The large 60S subunit contains 3 rRNA molecules (25S, 5.8S and 5S rRNA) and at least 46 different proteins.

The protein localises to the cytoplasm. Functionally, component of the ribosome, a large ribonucleoprotein complex responsible for the synthesis of proteins in the cell. The small ribosomal subunit (SSU) binds messenger RNAs (mRNAs) and translates the encoded message by selecting cognate aminoacyl-transfer RNA (tRNA) molecules. The large subunit (LSU) contains the ribosomal catalytic site termed the peptidyl transferase center (PTC), which catalyzes the formation of peptide bonds, thereby polymerizing the amino acids delivered by tRNAs into a polypeptide chain. The nascent polypeptides leave the ribosome through a tunnel in the LSU and interact with protein factors that function in enzymatic processing, targeting, and the membrane insertion of nascent chains at the exit of the ribosomal tunnel. This chain is Small ribosomal subunit protein eS12A (rps1201), found in Schizosaccharomyces pombe (strain 972 / ATCC 24843) (Fission yeast).